Reading from the N-terminus, the 143-residue chain is Transcriptional regulator MraZ (143 aa).

2 SpoVT-AbrB domains span residues 5–47 and 76–119; these read TYTP…PREE and ADEQ…DAAA.

It belongs to the MraZ family. In terms of assembly, forms oligomers.

The protein localises to the cytoplasm. Its subcellular location is the nucleoid. The chain is Transcriptional regulator MraZ from Corynebacterium diphtheriae (strain ATCC 700971 / NCTC 13129 / Biotype gravis).